Consider the following 378-residue polypeptide: tRNA (guanine(26)-N(2))-dimethyltransferase (378 aa).

The 371-residue stretch at 4 to 374 (KEVTEGKVRI…KGYEEIIRCV (371 aa)) folds into the Trm1 methyltransferase domain. 5 residues coordinate S-adenosyl-L-methionine: R44, R69, D87, D114, and A115. Residues C246, C249, C263, and C266 each contribute to the Zn(2+) site.

This sequence belongs to the class I-like SAM-binding methyltransferase superfamily. Trm1 family.

The enzyme catalyses guanosine(26) in tRNA + 2 S-adenosyl-L-methionine = N(2)-dimethylguanosine(26) in tRNA + 2 S-adenosyl-L-homocysteine + 2 H(+). Dimethylates a single guanine residue at position 26 of a number of tRNAs using S-adenosyl-L-methionine as donor of the methyl groups. The chain is tRNA (guanine(26)-N(2))-dimethyltransferase from Saccharolobus islandicus (strain M.16.27) (Sulfolobus islandicus).